A 131-amino-acid polypeptide reads, in one-letter code: Probable flagellum biosynthesis repressor protein FlbT (131 aa).

The protein belongs to the FlbT family.

Functionally, has a post-transcriptional repressor function in flagellum biogenesis. Associates with the 5'-UTR of fljK mRNA and promotes its degradation. This Caulobacter sp. (strain K31) protein is Probable flagellum biosynthesis repressor protein FlbT.